A 572-amino-acid chain; its full sequence is Probable D-xylulose kinase A (572 aa).

His95, Arg166, Asp282, and Asn283 together coordinate substrate. Residues Trp365, 470–471 (GG), and Asn474 contribute to the ATP site.

This sequence belongs to the FGGY kinase family.

It is found in the cytoplasm. The catalysed reaction is D-xylulose + ATP = D-xylulose 5-phosphate + ADP + H(+). In terms of biological role, highly specific D-xylulose kinase which participates in the catabolism of xylose. Xylose is a major component of hemicelluloses such as xylan. Most fungi utilize D-xylose via three enzymatic reactions, xylose reductase (XR), xylitol dehydrogenase (XDH), and xylulokinase, to form xylulose 5-phosphate, which enters pentose phosphate pathway. The polypeptide is Probable D-xylulose kinase A (xkiA) (Aspergillus oryzae (strain ATCC 42149 / RIB 40) (Yellow koji mold)).